The sequence spans 402 residues: Probable tRNA pseudouridine synthase D (402 aa).

Catalysis depends on D94, which acts as the Nucleophile. One can recognise a TRUD domain in the interval Y175–K364.

This sequence belongs to the pseudouridine synthase TruD family.

It carries out the reaction uridine(13) in tRNA = pseudouridine(13) in tRNA. In terms of biological role, could be responsible for synthesis of pseudouridine from uracil-13 in transfer RNAs. This is Probable tRNA pseudouridine synthase D from Methanococcus aeolicus (strain ATCC BAA-1280 / DSM 17508 / OCM 812 / Nankai-3).